We begin with the raw amino-acid sequence, 530 residues long: Copine-B (530 aa).

C2 domains follow at residues 1-125 (MTTP…SEIK) and 130-253 (ETGV…PLIN). 5 residues coordinate Ca(2+): aspartate 25, aspartate 31, aspartate 85, aspartate 87, and aspartate 100. A VWFA domain is found at 294–513 (NLMVAIDCTA…ETLREIPQQL (220 aa)).

The protein belongs to the copine family. The cofactor is Ca(2+).

The chain is Copine-B (cpnB-1) from Dictyostelium discoideum (Social amoeba).